The chain runs to 186 residues: Pyridoxal 5'-phosphate synthase subunit PdxT (186 aa).

Residue 47–49 coordinates L-glutamine; sequence GES. Residue Cys-76 is the Nucleophile of the active site. Residues Arg-102 and 130–131 contribute to the L-glutamine site; that span reads IR. Catalysis depends on charge relay system residues His-166 and Glu-168.

This sequence belongs to the glutaminase PdxT/SNO family. In terms of assembly, in the presence of PdxS, forms a dodecamer of heterodimers. Only shows activity in the heterodimer.

The catalysed reaction is aldehydo-D-ribose 5-phosphate + D-glyceraldehyde 3-phosphate + L-glutamine = pyridoxal 5'-phosphate + L-glutamate + phosphate + 3 H2O + H(+). It catalyses the reaction L-glutamine + H2O = L-glutamate + NH4(+). It functions in the pathway cofactor biosynthesis; pyridoxal 5'-phosphate biosynthesis. In terms of biological role, catalyzes the hydrolysis of glutamine to glutamate and ammonia as part of the biosynthesis of pyridoxal 5'-phosphate. The resulting ammonia molecule is channeled to the active site of PdxS. This chain is Pyridoxal 5'-phosphate synthase subunit PdxT, found in Staphylococcus epidermidis (strain ATCC 35984 / DSM 28319 / BCRC 17069 / CCUG 31568 / BM 3577 / RP62A).